The primary structure comprises 241 residues: MKSLIFVLLLGAVFAEEDKIVGGYECTRHSQAHQVSLNSGYHFCGGSLVSKDWVVSAAHCYKSVLRVRLGEHHIRVNEGTEQFISSSSVIRHPNYSSYNIDNDIMLIKLTEPATLNQYVHAVALPTECAADATMCTVSGWGNTMSSVDDGDKLQCLNLPILSHADCANSYPGMITQSMFCAGYLEGGKDSCQGDSGGPVVCNGVLQGVVSWGYGCAERDNPGVYAKVCVLSGWVRDTMASY.

The N-terminal stretch at 1-13 (MKSLIFVLLLGAV) is a signal peptide. The propeptide at 14-19 (FAEEDK) is activation peptide. One can recognise a Peptidase S1 domain in the interval 20 to 239 (IVGGYECTRH…LSGWVRDTMA (220 aa)). Intrachain disulfides connect C26–C155, C44–C60, C128–C228, C135–C201, C166–C180, and C191–C215. Residues H59 and D103 each act as charge relay system in the active site. The Charge relay system role is filled by S195.

The protein belongs to the peptidase S1 family.

It localises to the secreted. The protein resides in the extracellular space. It catalyses the reaction Preferential cleavage: Arg-|-Xaa, Lys-|-Xaa.. This Gadus morhua (Atlantic cod) protein is Trypsin-10.